The sequence spans 192 residues: Adenylate kinase (192 aa).

Position 12 to 17 (12 to 17 (GSGKTT)) interacts with ATP. The interval 33–62 (STGDLLRAEVAKDSELGKKIDKIISGGNLV) is NMP. Residues Thr34, Arg39, 60 to 62 (NLV), 87 to 90 (GYPR), and Gln94 contribute to the AMP site. Residues 129–135 (GRARGAD) are LID. Residue Arg130 participates in ATP binding. Residues Arg132 and Arg144 each contribute to the AMP site. Position 172 (Arg172) interacts with ATP.

This sequence belongs to the adenylate kinase family. As to quaternary structure, monomer.

It is found in the cytoplasm. It catalyses the reaction AMP + ATP = 2 ADP. Its pathway is purine metabolism; AMP biosynthesis via salvage pathway; AMP from ADP: step 1/1. In terms of biological role, catalyzes the reversible transfer of the terminal phosphate group between ATP and AMP. Plays an important role in cellular energy homeostasis and in adenine nucleotide metabolism. This Campylobacter hominis (strain ATCC BAA-381 / DSM 21671 / CCUG 45161 / LMG 19568 / NCTC 13146 / CH001A) protein is Adenylate kinase.